A 20-amino-acid chain; its full sequence is 21 kDa cold shock-induced protein (20 aa).

Residues 1–12 (TDSIKETIKETV) are compositionally biased toward basic and acidic residues. Residues 1 to 20 (TDSIKETIKETVNHQAEWPY) are disordered.

The polypeptide is 21 kDa cold shock-induced protein (Streptococcus thermophilus).